Consider the following 264-residue polypeptide: Apolipoprotein A-I (264 aa).

The signal sequence occupies residues 1–18 (MKAVVLTVAVFFLTGSQA). 2 repeat units span residues 67 to 88 (LKLLDNWDSLSSTVSKLREQIG) and 89 to 110 (PVTQEFWDKLEKDTVSLRQEMN). The tract at residues 67 to 264 (LKLLDNWDSL…DEATKKLTTQ (198 aa)) is 10 X approximate tandem repeats. Met109 is subject to Methionine sulfoxide. Residues 111–121 (KDLEEVKLKVQ) form a 3; half-length repeat. 3 repeat units span residues 122 to 143 (PYLDEFQKRWQEDVERYRQQVE), 144 to 165 (PLGTELREGARQKLQELHEKLS), and 166 to 187 (PLGQELRDRARAHVDALRTHLA). Residues 188–207 (PYSDELRQRLAARLEALKES) form a 7; truncated repeat. Repeat 8 spans residues 208 to 229 (SSLADYQAKATEHLSALGEKAK). Residues 230 to 240 (PALEDLRQGLL) form a 9; half-length repeat. Residues 241–264 (PVLENLKMSFWSAVDEATKKLTTQ) form repeat 10.

This sequence belongs to the apolipoprotein A1/A4/E family. In terms of assembly, homodimer. Interacts with APOA1BP and CLU. Component of a sperm activating protein complex (SPAP), consisting of APOA1, an immunoglobulin heavy chain, an immunoglobulin light chain and albumin. Interacts with NDRG1. Interacts with SCGB3A2. Interacts with NAXE and YJEFN3. Post-translationally, glycosylated. In terms of processing, palmitoylated. Phosphorylation sites are present in the extracellular medium.

Its subcellular location is the secreted. Participates in the reverse transport of cholesterol from tissues to the liver for excretion by promoting cholesterol efflux from tissues and by acting as a cofactor for the lecithin cholesterol acyltransferase (LCAT). As part of the SPAP complex, activates spermatozoa motility. The chain is Apolipoprotein A-I (ApoA1) from Marmota monax (Woodchuck).